A 497-amino-acid chain; its full sequence is Mechanosensitive ion channel protein 1, mitochondrial (497 aa).

A mitochondrion-targeting transit peptide spans 1 to 86 (MAGVRLSLLK…RAFSSKSDDF (86 aa)). The next 5 helical transmembrane spans lie at 152 to 172 (DVIV…VVMP), 216 to 236 (LVTF…TIAA), 238 to 258 (YFSP…LYRW), 280 to 300 (VLTL…MASA), and 305 to 325 (VAVQ…AFAA).

It belongs to the MscS (TC 1.A.23) family.

The protein localises to the mitochondrion membrane. Functionally, mechanosensitive channel that opens in response to stretch forces in the membrane lipid bilayer. This chain is Mechanosensitive ion channel protein 1, mitochondrial (MSL1), found in Arabidopsis thaliana (Mouse-ear cress).